A 284-amino-acid chain; its full sequence is Protease HtpX (284 aa).

2 helical membrane passes run 4–24 (ILLF…ILSL) and 33–53 (MGLL…SLLM). His-139 contributes to the Zn(2+) binding site. Glu-140 is a catalytic residue. His-143 contacts Zn(2+). Helical transmembrane passes span 147 to 167 (GDMV…IFAA) and 187 to 207 (IYFL…SMIA). Position 215 (Glu-215) interacts with Zn(2+).

The protein belongs to the peptidase M48B family. Zn(2+) serves as cofactor.

The protein resides in the cell inner membrane. This is Protease HtpX from Mannheimia succiniciproducens (strain KCTC 0769BP / MBEL55E).